The chain runs to 395 residues: Phosphoglycerate kinase (395 aa).

Residues 21–23 (DLN), arginine 36, 59–62 (HLGR), arginine 114, and arginine 147 contribute to the substrate site. ATP is bound by residues lysine 198, glutamate 320, and 346–349 (GGDT).

Belongs to the phosphoglycerate kinase family. In terms of assembly, monomer.

Its subcellular location is the cytoplasm. The catalysed reaction is (2R)-3-phosphoglycerate + ATP = (2R)-3-phospho-glyceroyl phosphate + ADP. The protein operates within carbohydrate degradation; glycolysis; pyruvate from D-glyceraldehyde 3-phosphate: step 2/5. This chain is Phosphoglycerate kinase, found in Nitrosospira multiformis (strain ATCC 25196 / NCIMB 11849 / C 71).